Here is a 79-residue protein sequence, read N- to C-terminus: Small ribosomal subunit protein bS21 (79 aa).

Basic residues-rich tracts occupy residues 47-59 (RKQAAAVKRHLKK) and 69-79 (GVGHRRKKSTT). The interval 47–79 (RKQAAAVKRHLKKISRDVSSRRGVGHRRKKSTT) is disordered.

This sequence belongs to the bacterial ribosomal protein bS21 family.

This chain is Small ribosomal subunit protein bS21, found in Legionella pneumophila (strain Paris).